We begin with the raw amino-acid sequence, 290 residues long: PIH1 domain-containing protein 1 (290 aa).

Phosphoserine is present on residues S12, S16, and S173.

This sequence belongs to the PIH1 family. As to quaternary structure, component of the R2TP complex composed at least of RUVBL1, RUVBL2, RPAP3 and PIHD1. Component of the PAQosome complex which is responsible for the biogenesis of several protein complexes and which consists of R2TP complex members RUVBL1, RUVBL2, RPAP3 and PIH1D1, URI complex members PFDN2, PFDN6, PDRG1, UXT and URI1 as well as ASDURF, POLR2E and DNAAF10/WDR92. Interacts with phosphorylated TELO2 and mediates interaction of TELO2 with the R2TP complex. Interacts with phosphorylated ECD, EFTUD2/SNRP116, RPB1 and UBR5 and with RPB1 in a phosphorylation-independent manner. Interacts with the core C/D box snoRNP particle components NOP58 and FBL and with RUVBL1/TIP49. Interacts with RPAP3 and DNAAF10. Interacts with histone H4 and with SWI/SNF complex member SMARCB1/SNF5. Interacts with the mTORC1 complex member RPTOR. Interacts with MSL1.

Its subcellular location is the nucleus. Its function is as follows. Involved in the assembly of C/D box small nucleolar ribonucleoprotein (snoRNP) particles. Recruits the SWI/SNF complex to the core promoter of rRNA genes and enhances pre-rRNA transcription. Mediates interaction of TELO2 with the R2TP complex which is necessary for the stability of MTOR and SMG1. Positively regulates the assembly and activity of the mTORC1 complex. The chain is PIH1 domain-containing protein 1 (Pih1d1) from Rattus norvegicus (Rat).